Reading from the N-terminus, the 392-residue chain is tRNA (guanine-N(7)-)-methyltransferase (392 aa).

3 residues coordinate S-adenosyl-L-methionine: Glu123, Glu148, and Asp175. 2 residues coordinate substrate: Lys201 and Asp231.

It belongs to the class I-like SAM-binding methyltransferase superfamily. TrmB family.

The enzyme catalyses guanosine(46) in tRNA + S-adenosyl-L-methionine = N(7)-methylguanosine(46) in tRNA + S-adenosyl-L-homocysteine. Its pathway is tRNA modification; N(7)-methylguanine-tRNA biosynthesis. Its function is as follows. Catalyzes the formation of N(7)-methylguanine at position 46 (m7G46) in tRNA. This Campylobacter jejuni (strain RM1221) protein is tRNA (guanine-N(7)-)-methyltransferase.